The primary structure comprises 118 residues: NADH-quinone oxidoreductase subunit A 2 (118 aa).

3 consecutive transmembrane segments (helical) span residues 5–25 (YLPI…SLIF), 62–82 (IIAM…PWAV), and 87–107 (LGMF…VGYI).

It belongs to the complex I subunit 3 family. As to quaternary structure, NDH-1 is composed of 14 different subunits. Subunits NuoA, H, J, K, L, M, N constitute the membrane sector of the complex.

It is found in the cell inner membrane. The catalysed reaction is a quinone + NADH + 5 H(+)(in) = a quinol + NAD(+) + 4 H(+)(out). In terms of biological role, NDH-1 shuttles electrons from NADH, via FMN and iron-sulfur (Fe-S) centers, to quinones in the respiratory chain. The immediate electron acceptor for the enzyme in this species is believed to be ubiquinone. Couples the redox reaction to proton translocation (for every two electrons transferred, four hydrogen ions are translocated across the cytoplasmic membrane), and thus conserves the redox energy in a proton gradient. The sequence is that of NADH-quinone oxidoreductase subunit A 2 from Geotalea uraniireducens (strain Rf4) (Geobacter uraniireducens).